The primary structure comprises 249 residues: Coproheme decarboxylase (249 aa).

Fe-coproporphyrin III contacts are provided by residues Arg-131, 145–149, His-172, Gln-185, and Ser-223; that span reads YPMDK. Tyr-145 is a catalytic residue.

Belongs to the ChdC family. Type 1 subfamily. Requires Fe-coproporphyrin III as cofactor.

The enzyme catalyses Fe-coproporphyrin III + 2 H2O2 + 2 H(+) = heme b + 2 CO2 + 4 H2O. The catalysed reaction is Fe-coproporphyrin III + H2O2 + H(+) = harderoheme III + CO2 + 2 H2O. It carries out the reaction harderoheme III + H2O2 + H(+) = heme b + CO2 + 2 H2O. Its pathway is porphyrin-containing compound metabolism; protoheme biosynthesis. In terms of biological role, involved in coproporphyrin-dependent heme b biosynthesis. Catalyzes the decarboxylation of Fe-coproporphyrin III (coproheme) to heme b (protoheme IX), the last step of the pathway. The reaction occurs in a stepwise manner with a three-propionate intermediate. In Shouchella clausii (strain KSM-K16) (Alkalihalobacillus clausii), this protein is Coproheme decarboxylase.